The sequence spans 212 residues: Thymidylate kinase (212 aa).

10-17 serves as a coordination point for ATP; that stretch reads GLEGAGKT.

It belongs to the thymidylate kinase family.

It catalyses the reaction dTMP + ATP = dTDP + ADP. In terms of biological role, phosphorylation of dTMP to form dTDP in both de novo and salvage pathways of dTTP synthesis. This Yersinia pestis bv. Antiqua (strain Antiqua) protein is Thymidylate kinase.